The primary structure comprises 306 residues: D-alanine--D-alanine ligase B (306 aa).

The region spanning Lys101–Glu303 is the ATP-grasp domain. Ile134–Thr189 contacts ATP. Positions 257, 270, and 272 each coordinate Mg(2+).

This sequence belongs to the D-alanine--D-alanine ligase family. It depends on Mg(2+) as a cofactor. Requires Mn(2+) as cofactor.

It localises to the cytoplasm. It carries out the reaction 2 D-alanine + ATP = D-alanyl-D-alanine + ADP + phosphate + H(+). Its pathway is cell wall biogenesis; peptidoglycan biosynthesis. Its function is as follows. Cell wall formation. In Shigella flexneri, this protein is D-alanine--D-alanine ligase B.